The sequence spans 186 residues: Peptide deformylase (186 aa).

Cys-113 and His-156 together coordinate Fe cation. Glu-157 is a catalytic residue. His-160 provides a ligand contact to Fe cation.

It belongs to the polypeptide deformylase family. The cofactor is Fe(2+).

It carries out the reaction N-terminal N-formyl-L-methionyl-[peptide] + H2O = N-terminal L-methionyl-[peptide] + formate. In terms of biological role, removes the formyl group from the N-terminal Met of newly synthesized proteins. Requires at least a dipeptide for an efficient rate of reaction. N-terminal L-methionine is a prerequisite for activity but the enzyme has broad specificity at other positions. The polypeptide is Peptide deformylase (Limosilactobacillus reuteri (strain DSM 20016) (Lactobacillus reuteri)).